Here is a 152-residue protein sequence, read N- to C-terminus: MGSSAITVSFLLFLAFQLPGQTGANPVYGSVSNADLMDFKNLLDRLEDKMPLEDEAVPSQVLSEQNEEAGAPLSPLSEMPPWMGEVNPAQREGGVLGRGPWESSDRSALLKSKLRALLTAPRSLRRSSCFGGRMDRIGAQSGLGCNSFRYRR.

A signal peptide spans 1–24 (MGSSAITVSFLLFLAFQLPGQTGA). 2 propeptides span residues 25–122 (NPVY…TAPR) and 92–102 (EGGVLGRGPWE). The segment at 58–101 (PSQVLSEQNEEAGAPLSPLSEMPPWMGEVNPAQREGGVLGRGPW) is disordered. S128 is modified (phosphoserine). Residues C129 and C145 are joined by a disulfide bond. An important for degradation of atrial natriuretic peptide by IDE region spans residues 146–150 (NSFRY).

The protein belongs to the natriuretic peptide family. In terms of assembly, homodimer; disulfide-linked antiparallel dimer. The precursor molecule is proteolytically cleaved by CORIN at Arg-122 to produce the atrial natriuretic peptide. Undergoes further proteolytic cleavage by unknown proteases to give rise to long-acting natriuretic peptide, vessel dilator and kaliuretic peptide. Additional processing gives rise to the auriculin and atriopeptin peptides. In the kidneys, alternative processing by an unknown protease results in the peptide urodilatin. In terms of processing, cleavage by MME initiates degradation of the factor and thereby regulates its activity. Degradation by IDE results in reduced activation of NPR1 (in vitro). During IDE degradation, the resulting products can temporarily stimulate NPR2 to produce cGMP, before the fragments are completely degraded and inactivated by IDE (in vitro). Post-translationally, degraded by IDE. Phosphorylation on Ser-128 decreases vasorelaxant activity.

Its subcellular location is the secreted. The protein localises to the perikaryon. It is found in the cell projection. In terms of biological role, hormone that plays a key role in mediating cardio-renal homeostasis, and is involved in vascular remodeling and regulating energy metabolism. Acts by specifically binding and stimulating NPR1 to produce cGMP, which in turn activates effector proteins, such as PRKG1, that drive various biological responses. Regulates vasodilation, natriuresis, diuresis and aldosterone synthesis and is therefore essential for regulating blood pressure, controlling the extracellular fluid volume and maintaining the fluid-electrolyte balance. Also involved in inhibiting cardiac remodeling and cardiac hypertrophy by inducing cardiomyocyte apoptosis and attenuating the growth of cardiomyocytes and fibroblasts. Plays a role in female pregnancy by promoting trophoblast invasion and spiral artery remodeling in uterus, and thus prevents pregnancy-induced hypertension. In adipose tissue, acts in various cGMP- and PKG-dependent pathways to regulate lipid metabolism and energy homeostasis. This includes up-regulating lipid metabolism and mitochondrial oxygen utilization by activating the AMP-activated protein kinase (AMPK), and increasing energy expenditure by acting via MAPK11 to promote the UCP1-dependent thermogenesis of brown adipose tissue. Binds the clearance receptor NPR3 which removes the hormone from circulation. Its function is as follows. May have a role in cardio-renal homeostasis through regulation of natriuresis, diuresis, vasodilation, and inhibiting aldosterone synthesis. In vitro, promotes the production of cGMP and induces vasodilation. May promote natriuresis, at least in part, by enhancing prostaglandin E2 synthesis resulting in the inhibition of renal Na+-K+-ATPase. However reports on the involvement of this peptide in mammal blood volume and blood pressure homeostasis are conflicting; according to a report, in vivo it is not sufficient to activate cGMP and does not inhibit collecting duct transport nor effect diuresis and natriuresis. Appears to bind to specific receptors that are distinct from the receptors bound by atrial natriuretic peptide and vessel dilator. Possibly enhances protein excretion in urine by decreasing proximal tubular protein reabsorption. May have a role in cardio-renal homeostasis through regulation of natriuresis, diuresis, and vasodilation. In vitro, promotes the production of cGMP and induces vasodilation. May promote natriuresis, at least in part, by enhancing prostaglandin E2 synthesis resulting in the inhibition of renal Na+-K+-ATPase. However reports on the involvement of this peptide in mammal blood volume and blood pressure homeostasis are conflicting; according to a report it is not sufficient to activate cGMP and does not inhibit collecting duct transport nor effect diuresis and natriuresis. Appears to bind to specific receptors that are distinct from the receptors bound by the atrial natriuretic and long-acting natriuretic peptides. Possibly functions in protein excretion in urine by maintaining the integrity of the proximal tubules and enhancing protein excretion by decreasing proximal tubular protein reabsorption. Functionally, may have a role in cardio-renal homeostasis through regulation of diuresis and inhibiting aldosterone synthesis. In vitro, promotes the production of cGMP and induces vasodilation. May promote natriuresis, at least in part, by enhancing prostaglandin E2 synthesis resulting in the inhibition of renal Na+-K+-ATPase. May have a role in potassium excretion but not sodium excretion (natriuresis). Possibly enhances protein excretion in urine by decreasing proximal tubular protein reabsorption. In terms of biological role, hormone produced in the kidneys that appears to be important for maintaining cardio-renal homeostasis. Mediates vasodilation, natriuresis and diuresis primarily in the renal system, in order to maintain the extracellular fluid volume and control the fluid-electrolyte balance. Specifically binds and stimulates cGMP production by renal transmembrane receptors, likely NPR1. Urodilatin not ANP, may be the natriuretic peptide responsible for the regulation of sodium and water homeostasis in the kidney. Its function is as follows. May have a role in cardio-renal homeostasis through regulation of natriuresis and vasodilation. In vivo promotes natriuresis and in vitro, vasodilates renal artery strips. May have a role in cardio-renal homeostasis through regulation of regulation of natriuresis and vasodilation. In vivo promotes natriuresis. In vitro, vasodilates intestinal smooth muscle but not smooth muscle strips. Functionally, may have a role in cardio-renal homeostasis through regulation of natriuresis and vasodilation. In vivo promotes natriuresis. In vitro, selectively vasodilates intestinal and vascular smooth muscle strips. In terms of biological role, may have a role in cardio-renal homeostasis through regulation of natriuresis and vasodilation. In vivo promotes natriuresis. In vitro, selectively vasodilates intestinal smooth muscle but not vascular smooth muscle strips. This Bos taurus (Bovine) protein is Natriuretic peptides A (NPPA).